Reading from the N-terminus, the 282-residue chain is MSAIVLDGKAYAKQLEGEMQERVERIRAKTNGEPPILATILVGSDPASATYVRMKGNACRRVGMDSLSVTLPEETTTEELLAKIDELNADERVRGILLQHPVPKQIDERACFDRISIDKDVDGVTTHGFGRMAMDEPAYGSATPAGIMRLLRHYQIPLEGKEAVVVGRSPILGKPMAMMLLAANATVTICHSRTKNLPDVIRRADIIVGALGKPEFIKGDWIRDGAVVVDAGYHPGGVGDIELSAVIGRCAAYTPVPGGVGPMTIATLIAQTVEAAEKAAGI.

NADP(+) contacts are provided by residues 167–169 (GRS) and Ser192.

The protein belongs to the tetrahydrofolate dehydrogenase/cyclohydrolase family. In terms of assembly, homodimer.

It carries out the reaction (6R)-5,10-methylene-5,6,7,8-tetrahydrofolate + NADP(+) = (6R)-5,10-methenyltetrahydrofolate + NADPH. The catalysed reaction is (6R)-5,10-methenyltetrahydrofolate + H2O = (6R)-10-formyltetrahydrofolate + H(+). Its pathway is one-carbon metabolism; tetrahydrofolate interconversion. In terms of biological role, catalyzes the oxidation of 5,10-methylenetetrahydrofolate to 5,10-methenyltetrahydrofolate and then the hydrolysis of 5,10-methenyltetrahydrofolate to 10-formyltetrahydrofolate. The protein is Bifunctional protein FolD of Acidobacterium capsulatum (strain ATCC 51196 / DSM 11244 / BCRC 80197 / JCM 7670 / NBRC 15755 / NCIMB 13165 / 161).